Consider the following 348-residue polypeptide: Large ribosomal subunit protein uL3m (348 aa).

Residues 1–40 constitute a mitochondrion transit peptide; that stretch reads MPGWRLLAQAGARVLGCGARGLGADPGLERRKNILFFVRN.

The protein belongs to the universal ribosomal protein uL3 family. As to quaternary structure, component of the mitochondrial ribosome large subunit (39S) which comprises a 16S rRNA and about 50 distinct proteins.

The protein localises to the mitochondrion. This Mus musculus (Mouse) protein is Large ribosomal subunit protein uL3m (Mrpl3).